Reading from the N-terminus, the 1267-residue chain is RNA-directed RNA polymerase lambda-3 (1267 aa).

The 238-residue stretch at 555 to 792 (LSPTSGSAVI…KLYFIFGCRI (238 aa)) folds into the RdRp catalytic domain.

This sequence belongs to the reoviridae RNA-directed RNA polymerase family.

It is found in the virion. The enzyme catalyses RNA(n) + a ribonucleoside 5'-triphosphate = RNA(n+1) + diphosphate. Its function is as follows. RNA-directed RNA polymerase that is involved in transcription and genome replication. Following infection, it catalyzes the synthesis of fully conservative plus strands. After core assembly, which consists in recruitment of one capped plus-strand for each genomic segments and polymerase complexes, the polymerase switches mode and catalyzes the synthesis of complementary minus-strands. The sequence is that of RNA-directed RNA polymerase lambda-3 (L1) from Reovirus type 3 (strain Dearing) (T3D).